Here is a 246-residue protein sequence, read N- to C-terminus: tRNA (guanine-N(7)-)-methyltransferase (246 aa).

The segment at methionine 1–proline 23 is disordered. Residues glutamate 75, glutamate 100, aspartate 127, and aspartate 150 each contribute to the S-adenosyl-L-methionine site. Residue aspartate 150 is part of the active site. Lysine 154 is a substrate binding site. The tract at residues lysine 156–arginine 161 is interaction with RNA. Substrate is bound by residues aspartate 186 and threonine 225–glutamate 228.

This sequence belongs to the class I-like SAM-binding methyltransferase superfamily. TrmB family.

The catalysed reaction is guanosine(46) in tRNA + S-adenosyl-L-methionine = N(7)-methylguanosine(46) in tRNA + S-adenosyl-L-homocysteine. It participates in tRNA modification; N(7)-methylguanine-tRNA biosynthesis. Functionally, catalyzes the formation of N(7)-methylguanine at position 46 (m7G46) in tRNA. This is tRNA (guanine-N(7)-)-methyltransferase from Polaromonas naphthalenivorans (strain CJ2).